Here is a 498-residue protein sequence, read N- to C-terminus: Glycerol kinase (498 aa).

Thr12 contributes to the ADP binding site. ATP-binding residues include Thr12, Thr13, and Ser14. A sn-glycerol 3-phosphate-binding site is contributed by Thr12. ADP is bound at residue Arg16. Sn-glycerol 3-phosphate contacts are provided by Arg82, Glu83, Tyr134, and Asp243. Glycerol-binding residues include Arg82, Glu83, Tyr134, Asp243, and Gln244. 2 residues coordinate ADP: Thr265 and Gly308. Residues Thr265, Gly308, Gln312, and Gly409 each contribute to the ATP site. ADP-binding residues include Gly409 and Asn413.

The protein belongs to the FGGY kinase family. As to quaternary structure, homotetramer and homodimer (in equilibrium).

It catalyses the reaction glycerol + ATP = sn-glycerol 3-phosphate + ADP + H(+). Its pathway is polyol metabolism; glycerol degradation via glycerol kinase pathway; sn-glycerol 3-phosphate from glycerol: step 1/1. Its activity is regulated as follows. Activated by phosphorylation and inhibited by fructose 1,6-bisphosphate (FBP). Its function is as follows. Key enzyme in the regulation of glycerol uptake and metabolism. Catalyzes the phosphorylation of glycerol to yield sn-glycerol 3-phosphate. This Clostridium botulinum (strain ATCC 19397 / Type A) protein is Glycerol kinase.